The following is a 301-amino-acid chain: MLPSIAKHAALHQVNPLKKHGQNFIFDSSLCDKIVRASNLAENSRVLEIGPGTGGLTRSILQKNPESLTVIETDERCLPLLNEIKEYYPNLNIIKQDALKINLTDLSCDIVNSVGFAYKKREAKPITNRRANDIGESKAIDYKVTIISNLPYHIGTELVIRWLKEARLITSMTLMLQKEVVERICAIPSTKAYGRLSVICQLIAKVEKCFDVAPTAFYPPPKVYSAIVKLIPLENPLSIALINKVEQITKLAFAGRRKMIKSSLKNLVPNIHEVLTQLKINDNYRAENLAPQDYLRIAEIL.

Residues asparagine 23, isoleucine 25, glycine 50, glutamate 72, aspartate 97, and asparagine 149 each coordinate S-adenosyl-L-methionine.

Belongs to the class I-like SAM-binding methyltransferase superfamily. rRNA adenine N(6)-methyltransferase family. RsmA subfamily.

The protein localises to the cytoplasm. The catalysed reaction is adenosine(1518)/adenosine(1519) in 16S rRNA + 4 S-adenosyl-L-methionine = N(6)-dimethyladenosine(1518)/N(6)-dimethyladenosine(1519) in 16S rRNA + 4 S-adenosyl-L-homocysteine + 4 H(+). Functionally, specifically dimethylates two adjacent adenosines (A1518 and A1519) in the loop of a conserved hairpin near the 3'-end of 16S rRNA in the 30S particle. May play a critical role in biogenesis of 30S subunits. This is Ribosomal RNA small subunit methyltransferase A from Rickettsia peacockii (strain Rustic).